The chain runs to 369 residues: Holliday junction branch migration complex subunit RuvB (369 aa).

The segment at 1–21 (MHKNENNRLLGSVSLPDDPDR) is disordered. Positions 1–184 (MHKNENNRLL…FGIPIRLNFY (184 aa)) are large ATPase domain (RuvB-L). ATP is bound by residues leucine 23, arginine 24, glycine 65, lysine 68, threonine 69, threonine 70, 131 to 133 (EDY), arginine 174, tyrosine 184, and arginine 221. Residue threonine 69 participates in Mg(2+) binding. Positions 185 to 255 (TIEELEYIVK…IADTALSRLE (71 aa)) are small ATPAse domain (RuvB-S). The tract at residues 258 to 369 (HLGLDPLDRN…QKHLWEKDYD (112 aa)) is head domain (RuvB-H). Residues arginine 294, arginine 313, and arginine 318 each contribute to the DNA site.

The protein belongs to the RuvB family. In terms of assembly, homohexamer. Forms an RuvA(8)-RuvB(12)-Holliday junction (HJ) complex. HJ DNA is sandwiched between 2 RuvA tetramers; dsDNA enters through RuvA and exits via RuvB. An RuvB hexamer assembles on each DNA strand where it exits the tetramer. Each RuvB hexamer is contacted by two RuvA subunits (via domain III) on 2 adjacent RuvB subunits; this complex drives branch migration. In the full resolvosome a probable DNA-RuvA(4)-RuvB(12)-RuvC(2) complex forms which resolves the HJ.

The protein resides in the cytoplasm. The catalysed reaction is ATP + H2O = ADP + phosphate + H(+). The RuvA-RuvB-RuvC complex processes Holliday junction (HJ) DNA during genetic recombination and DNA repair, while the RuvA-RuvB complex plays an important role in the rescue of blocked DNA replication forks via replication fork reversal (RFR). RuvA specifically binds to HJ cruciform DNA, conferring on it an open structure. The RuvB hexamer acts as an ATP-dependent pump, pulling dsDNA into and through the RuvAB complex. RuvB forms 2 homohexamers on either side of HJ DNA bound by 1 or 2 RuvA tetramers; 4 subunits per hexamer contact DNA at a time. Coordinated motions by a converter formed by DNA-disengaged RuvB subunits stimulates ATP hydrolysis and nucleotide exchange. Immobilization of the converter enables RuvB to convert the ATP-contained energy into a lever motion, pulling 2 nucleotides of DNA out of the RuvA tetramer per ATP hydrolyzed, thus driving DNA branch migration. The RuvB motors rotate together with the DNA substrate, which together with the progressing nucleotide cycle form the mechanistic basis for DNA recombination by continuous HJ branch migration. Branch migration allows RuvC to scan DNA until it finds its consensus sequence, where it cleaves and resolves cruciform DNA. The chain is Holliday junction branch migration complex subunit RuvB from Bartonella bacilliformis (strain ATCC 35685 / KC583 / Herrer 020/F12,63).